A 133-amino-acid polypeptide reads, in one-letter code: Small ribosomal subunit protein uS11 (133 aa).

The interval 1 to 23 (MPPKTRGAVRKPRKKDKKNIALG) is disordered. Basic residues predominate over residues 7–17 (GAVRKPRKKDK).

This sequence belongs to the universal ribosomal protein uS11 family. As to quaternary structure, part of the 30S ribosomal subunit. Interacts with proteins S7 and S18. Binds to IF-3.

Its function is as follows. Located on the platform of the 30S subunit, it bridges several disparate RNA helices of the 16S rRNA. Forms part of the Shine-Dalgarno cleft in the 70S ribosome. This Pseudarthrobacter chlorophenolicus (strain ATCC 700700 / DSM 12829 / CIP 107037 / JCM 12360 / KCTC 9906 / NCIMB 13794 / A6) (Arthrobacter chlorophenolicus) protein is Small ribosomal subunit protein uS11.